Consider the following 663-residue polypeptide: Translation factor GUF1, mitochondrial (663 aa).

Residues 1–44 (MRGCLQSVRWLTTALRRPAPQLSCLPFQPFASTSRLFSSCASRA) constitute a mitochondrion transit peptide. One can recognise a tr-type G domain in the interval 65 to 245 (ERFRNFCIVA…TIVEQIPAPV (181 aa)). Residues 74 to 81 (AHVDHGKS), 138 to 142 (DTPGH), and 192 to 195 (NKVD) each bind GTP.

The protein belongs to the TRAFAC class translation factor GTPase superfamily. Classic translation factor GTPase family. LepA subfamily.

Its subcellular location is the mitochondrion inner membrane. It carries out the reaction GTP + H2O = GDP + phosphate + H(+). Functionally, promotes mitochondrial protein synthesis. May act as a fidelity factor of the translation reaction, by catalyzing a one-codon backward translocation of tRNAs on improperly translocated ribosomes. Binds to mitochondrial ribosomes in a GTP-dependent manner. The sequence is that of Translation factor GUF1, mitochondrial from Coccidioides posadasii (strain C735) (Valley fever fungus).